A 230-amino-acid chain; its full sequence is Ribonuclease 3 (230 aa).

In terms of domain architecture, RNase III spans 5-134 (EALLKSSFAI…FLGALLLDKG (130 aa)). Glutamate 47 provides a ligand contact to Mg(2+). Aspartate 51 is an active-site residue. Residues aspartate 120 and glutamate 123 each contribute to the Mg(2+) site. Residue glutamate 123 is part of the active site. A DRBM domain is found at 160 to 229 (DYKTSLQEIL…AENALKALSE (70 aa)).

It belongs to the ribonuclease III family. As to quaternary structure, homodimer. Requires Mg(2+) as cofactor.

The protein resides in the cytoplasm. The catalysed reaction is Endonucleolytic cleavage to 5'-phosphomonoester.. In terms of biological role, digests double-stranded RNA. Involved in the processing of primary rRNA transcript to yield the immediate precursors to the large and small rRNAs (23S and 16S). Processes some mRNAs, and tRNAs when they are encoded in the rRNA operon. Processes pre-crRNA and tracrRNA of type II CRISPR loci if present in the organism. This is Ribonuclease 3 from Streptococcus uberis (strain ATCC BAA-854 / 0140J).